A 143-amino-acid chain; its full sequence is Large ribosomal subunit protein uL13 (143 aa).

The protein belongs to the universal ribosomal protein uL13 family. As to quaternary structure, part of the 50S ribosomal subunit.

This protein is one of the early assembly proteins of the 50S ribosomal subunit, although it is not seen to bind rRNA by itself. It is important during the early stages of 50S assembly. This is Large ribosomal subunit protein uL13 from Geobacter sulfurreducens (strain ATCC 51573 / DSM 12127 / PCA).